The following is a 461-amino-acid chain: UDP-glucosyltransferase 1 (461 aa).

The protein belongs to the UDP-glycosyltransferase family.

It participates in secondary metabolite biosynthesis. Functionally, UDP-glucosyltransferase; part of the pathway that mediates the biosynthesis of tenellin-type 2-pyridones, iron-chelating compounds involved in iron stress tolerance, competition with the natural competitor fungus Metarhizium robertsii and insect hosts infection. Targets the N-OH hydroxyl residue of 15-hydroxytellenin (15-HT) to produce pyridovericin-N-O-(beta-D-glucopyranoside) which is further methylated by the methyltransferase MT1 to yield pyridovericin-N-O-(4-O-methyl-beta-D-glucopyranoside) (PMGP). The pathway begins with the assembly of the polyketide-amino acid backbone by the hybrid PKS-NRPS tenS with the help of the enoyl reductase tenC. These enzymes catalyze the synthesis of the pyrrolidine-2-dione intermediates pretellinin A, 11-hydropretellenin A, 12-hydropretellenin A, 13-hydropretellenin A, 14-hydropretellenin A, 12-oxopretellenin A and prototellinin D. The cytochrome P450 monooxygenase tenA then catalyzes an oxidative ring expansion of pretenellin A and 14-hydropretellenin A to form the 2-pyridone core, leading to pretenellin B and pyridovericin, respectively. The cytochrome P450 monooxygenase tenB is then required for the selective N-hydroxylation of the 2-pyridone nitrogen of yield tellinin and 15-hydroxytellenin (15-HT), respectively. The UDP-glucosyltransferase GT1 and the methyltransferase MT1, located outside the tenS gene cluster, contribute to the stepwise glycosylation and methylation of 15-HT to obtain the glycoside pyridovericin-N-O-(4-O-methyl-beta-D-glucopyranoside) (PMGP). Additional related compounds such as 1-O-methyl-15-HT, (8Z)-1-O-methyl-15-HT, and O-methyltenellin A are also produced but the enzymes involved in their biosynthesis have still to be determined. This chain is UDP-glucosyltransferase 1, found in Beauveria bassiana (strain ARSEF 2860) (White muscardine disease fungus).